Here is a 103-residue protein sequence, read N- to C-terminus: UPF0058 protein MJ1205 (103 aa).

This sequence belongs to the UPF0058 family.

This Methanocaldococcus jannaschii (strain ATCC 43067 / DSM 2661 / JAL-1 / JCM 10045 / NBRC 100440) (Methanococcus jannaschii) protein is UPF0058 protein MJ1205.